A 128-amino-acid polypeptide reads, in one-letter code: uncharacterized protein (128 aa).

Residues 1 to 26 (MNSATSETTTNTGAAETTTSTGAAET) form a disordered region. A helical membrane pass occupies residues 105-127 (IANGLLTNNGISVFISTVLLAIV).

This sequence belongs to the flocculin family.

The protein resides in the membrane. This is an uncharacterized protein from Saccharomyces cerevisiae (strain ATCC 204508 / S288c) (Baker's yeast).